The sequence spans 371 residues: Queuine tRNA-ribosyltransferase (371 aa).

Aspartate 90 functions as the Proton acceptor in the catalytic mechanism. Substrate contacts are provided by residues 90–94 (DSGGF), aspartate 144, glutamine 188, and glycine 215. An RNA binding region spans residues 246–252 (GVGTPED). Aspartate 265 functions as the Nucleophile in the catalytic mechanism. The RNA binding; important for wobble base 34 recognition stretch occupies residues 270 to 274 (TRNAR). Residues cysteine 303, cysteine 305, cysteine 308, and histidine 334 each coordinate Zn(2+).

The protein belongs to the queuine tRNA-ribosyltransferase family. Homodimer. Within each dimer, one monomer is responsible for RNA recognition and catalysis, while the other monomer binds to the replacement base PreQ1. Requires Zn(2+) as cofactor.

The enzyme catalyses 7-aminomethyl-7-carbaguanine + guanosine(34) in tRNA = 7-aminomethyl-7-carbaguanosine(34) in tRNA + guanine. The protein operates within tRNA modification; tRNA-queuosine biosynthesis. In terms of biological role, catalyzes the base-exchange of a guanine (G) residue with the queuine precursor 7-aminomethyl-7-deazaguanine (PreQ1) at position 34 (anticodon wobble position) in tRNAs with GU(N) anticodons (tRNA-Asp, -Asn, -His and -Tyr). Catalysis occurs through a double-displacement mechanism. The nucleophile active site attacks the C1' of nucleotide 34 to detach the guanine base from the RNA, forming a covalent enzyme-RNA intermediate. The proton acceptor active site deprotonates the incoming PreQ1, allowing a nucleophilic attack on the C1' of the ribose to form the product. After dissociation, two additional enzymatic reactions on the tRNA convert PreQ1 to queuine (Q), resulting in the hypermodified nucleoside queuosine (7-(((4,5-cis-dihydroxy-2-cyclopenten-1-yl)amino)methyl)-7-deazaguanosine). The protein is Queuine tRNA-ribosyltransferase of Neisseria gonorrhoeae (strain NCCP11945).